Reading from the N-terminus, the 323-residue chain is tRNA U34 carboxymethyltransferase (323 aa).

Carboxy-S-adenosyl-L-methionine contacts are provided by residues Lys91, Trp105, Lys110, Gly130, 152–154 (DPT), 181–182 (IE), Met196, Tyr200, and Arg315.

This sequence belongs to the class I-like SAM-binding methyltransferase superfamily. CmoB family. In terms of assembly, homotetramer.

It catalyses the reaction carboxy-S-adenosyl-L-methionine + 5-hydroxyuridine(34) in tRNA = 5-carboxymethoxyuridine(34) in tRNA + S-adenosyl-L-homocysteine + H(+). Catalyzes carboxymethyl transfer from carboxy-S-adenosyl-L-methionine (Cx-SAM) to 5-hydroxyuridine (ho5U) to form 5-carboxymethoxyuridine (cmo5U) at position 34 in tRNAs. The protein is tRNA U34 carboxymethyltransferase of Shigella boydii serotype 18 (strain CDC 3083-94 / BS512).